Here is a 531-residue protein sequence, read N- to C-terminus: MFSLQNLCRKTLPDCKLPEFFDEYILQLLGLYWENHGTIQRAGNNCVLIQQHTLIPVNEALRIAASEENYEIVSLLLAWEGNLYYAIIGALEGNRHDLIRKYDDQIKDHHEILPFIDDPVIFHKCHIMRRCFFDCILYQAVKYSKFRVLLYFKYRLENDLPLAHLLIKKACEDHNYEVIKWIYENLHIYNIMDTFGCAIAHKDLRLYRLGYTFIYNRIVPYKYHYLDVLILSGLHLLYKVAAKGYLDFILETLKYDHNNDNLDIILTQAATYNHRKILTYYIPQLTYAQIEQCLFMAIKKKSSKKTLNLLLSHLKLSIKLIKKISQYVATYNSTNIIGILNMRRKKKIYLDIILTKFVKKAIFNKFVVRCMDTFSINPERIIKMAARINKMLLVKKISEHAWKNHAARLKHLKHAVYTMKHKDGKNRLMNLIYDHYYYHMQGEEIFSLARFYAIHHAPKLFDVFYDCCLLDTIRFKNLLLDCSHIIGKNAHDATNITIVNKYIGNLFAMGVLSKKEILQDYPSIYSKHYMP.

Belongs to the asfivirus MGF 505 family.

Its function is as follows. Plays a role in virus cell tropism, and may be required for efficient virus replication in macrophages. The sequence is that of Protein MGF 505-1R from Ornithodoros (relapsing fever ticks).